Reading from the N-terminus, the 619-residue chain is Schlafen family member 12-like (619 aa).

A helical membrane pass occupies residues 598 to 618 (IFLFVCLFRFCLFVCLFVFFL).

It belongs to the Schlafen family.

Its subcellular location is the membrane. The chain is Schlafen family member 12-like (SLFN12L) from Pongo abelii (Sumatran orangutan).